A 353-amino-acid polypeptide reads, in one-letter code: Glutamine synthetase nodule isozyme (353 aa).

The GS beta-grasp domain maps to 19-99 (IIAEYIWVGG…VMCDTYTPAG (81 aa)). Residues 106-353 (KRHAAAKIFS…TSMIAETTLL (248 aa)) form the GS catalytic domain.

The protein belongs to the glutamine synthetase family. As to quaternary structure, homooctamer.

The protein resides in the cytoplasm. It carries out the reaction L-glutamate + NH4(+) + ATP = L-glutamine + ADP + phosphate + H(+). The polypeptide is Glutamine synthetase nodule isozyme (Lupinus luteus (European yellow lupine)).